The sequence spans 92 residues: Large ribosomal subunit protein bL27 (92 aa).

Residues 1 to 22 (MAHTKAGGSTRNGRDSRGQRLG) are disordered.

The protein belongs to the bacterial ribosomal protein bL27 family.

The chain is Large ribosomal subunit protein bL27 from Mycoplasmopsis agalactiae (strain NCTC 10123 / CIP 59.7 / PG2) (Mycoplasma agalactiae).